The chain runs to 126 residues: Defensin-like protein 183 (126 aa).

Residues Met-1–Ala-26 form the signal peptide. 8 disulfide bridges follow: Cys-29–Cys-68, Cys-36–Cys-55, Cys-39–Cys-62, Cys-43–Cys-64, Cys-80–Cys-126, Cys-91–Cys-111, Cys-96–Cys-120, and Cys-100–Cys-122.

It belongs to the DEFL family.

It is found in the secreted. This Arabidopsis thaliana (Mouse-ear cress) protein is Defensin-like protein 183 (LCR19).